A 948-amino-acid chain; its full sequence is FRIGIDA-like protein 5 (948 aa).

The stretch at 47 to 164 (DSTRSVLEER…VEKHRERIVA (118 aa)) forms a coiled coil. 3 disordered regions span residues 447-500 (ESAQ…APSQ), 518-538 (VKES…SGTE), and 804-894 (RNTS…YPSH). 2 stretches are compositionally biased toward basic and acidic residues: residues 459 to 475 (SYEK…KSEA) and 518 to 527 (VKESGADHQP). Positions 807–817 (SNGSGSGSASS) are enriched in low complexity. Polar residues predominate over residues 818–830 (KPDSTIKQSQTAK). Residues 861–872 (FSKKNKRGKKRS) are compositionally biased toward basic residues. The span at 873–894 (MSGNNQSSGHIASHTSNHYPSH) shows a compositional bias: polar residues.

This sequence belongs to the Frigida family. Expressed at low levels during seed development.

The protein is FRIGIDA-like protein 5 (FRL5) of Arabidopsis thaliana (Mouse-ear cress).